Here is a 620-residue protein sequence, read N- to C-terminus: Chaperone protein DnaK (620 aa).

Position 197 is a phosphothreonine; by autocatalysis (Thr197). The tract at residues 591-620 is disordered; it reads AQKLGEAMANKNNAEQPKKKDDDVIDAEVE.

It belongs to the heat shock protein 70 family.

Its function is as follows. Acts as a chaperone. The chain is Chaperone protein DnaK from Helicobacter pylori (strain HPAG1).